Here is a 384-residue protein sequence, read N- to C-terminus: Anhydro-N-acetylmuramic acid kinase (384 aa).

Position 9–16 (9–16) interacts with ATP; the sequence is GTSYDAID.

Belongs to the anhydro-N-acetylmuramic acid kinase family.

It catalyses the reaction 1,6-anhydro-N-acetyl-beta-muramate + ATP + H2O = N-acetyl-D-muramate 6-phosphate + ADP + H(+). It participates in amino-sugar metabolism; 1,6-anhydro-N-acetylmuramate degradation. The protein operates within cell wall biogenesis; peptidoglycan recycling. In terms of biological role, catalyzes the specific phosphorylation of 1,6-anhydro-N-acetylmuramic acid (anhMurNAc) with the simultaneous cleavage of the 1,6-anhydro ring, generating MurNAc-6-P. Is required for the utilization of anhMurNAc either imported from the medium or derived from its own cell wall murein, and thus plays a role in cell wall recycling. The polypeptide is Anhydro-N-acetylmuramic acid kinase (Streptomyces avermitilis (strain ATCC 31267 / DSM 46492 / JCM 5070 / NBRC 14893 / NCIMB 12804 / NRRL 8165 / MA-4680)).